Reading from the N-terminus, the 198-residue chain is Phycocyanobilin lyase CpcT homolog (198 aa).

The protein belongs to the CpcT/CpeT biliprotein lyase family.

In terms of biological role, covalently attaches a chromophore to Cys residue(s) of phycobiliproteins. In vitro is not seen to act as a chromophore lyase for ApcA1, ApcA2, ApcB, ApcD, ApcF, CpcB or PecB, the lyase activity is therefore unsure. The protein is Phycocyanobilin lyase CpcT homolog (cpcT2) of Nostoc sp. (strain PCC 7120 / SAG 25.82 / UTEX 2576).